An 88-amino-acid polypeptide reads, in one-letter code: Sm-like protein LSM5 (88 aa).

Alanine 2 carries the post-translational modification N-acetylalanine. Residues 9–84 (LPSELIDRCI…IAILVPGGSP (76 aa)) form the Sm domain.

Belongs to the snRNP Sm proteins family. In terms of assembly, component of the heptameric LSM1-LSM7 complex that forms a seven-membered ring structure with a donut shape. The LSM subunits are arranged in the order LSM1, LSM2, LSM3, LSM6, LSM5, LSM7 and LSM4. Component of the heptameric LSM2-LSM8 complex that forms a seven-membered ring structure with a donut shape. The LSM subunits are arranged in the order LSM8, LSM2, LSM3, LSM6, LSM5, LSM7 and LSM4. LSM2 subunit interacts only with its two neighboring subunits, LSM6A or LSM6B and LSM7. In terms of tissue distribution, expressed in roots, leaves, stems, flowers and siliques.

The protein localises to the cytoplasm. It localises to the nucleus. Component of LSM protein complexes, which are involved in RNA processing. Component of the cytoplasmic LSM1-LSM7 complex which is involved in mRNA degradation by promoting decapping and leading to accurate 5'-3' mRNA decay. The cytoplasmic LSM1-LSM7 complex regulates developmental gene expression by the decapping of specific development-related transcripts. Component of the nuclear LSM2-LSM8 complex which is involved splicing nuclear mRNAs. LSM2-LSM8 binds directly to the U6 small nuclear RNAs (snRNAs) and is essential for accurate splicing of selected development-related mRNAs through the stabilization of the spliceosomal U6 snRNA. Plays a critical role in the regulation of development-related gene expression. Involved in the control of plant sensitivity to abscisic acid (ABA) and drought. Functions with ABH1 as negative regulator of ABA signaling in guard cells. Required for regulation of splicing efficiency of many stress-responsive genes under stress conditions. The protein is Sm-like protein LSM5 of Arabidopsis thaliana (Mouse-ear cress).